A 300-amino-acid polypeptide reads, in one-letter code: MFGLRKSPANLPKHNSVDLKSSKPNPFDSDDESDNKHTLNPSKRTTSEPSLADMTNPFGGERVQKGDSSSSKQSLFSNSKYQYKNNFRDSGGIENQSVQELEGYAVYKAEETTKSVQGCLKVAEDIRSDATRTLVMLHDQGEQITRTHHKAVEIDHDLSRGEKLLGSLGGMFSKTWKPKKTRPINGPVVTRDDSPTRRVNHLEKREKLGLNSAPRGQSRTREPLPESADAYQRVEMEKAKQDDGLSDLSDILGELKNMAVDMGSEIEKQNKGLDHLHDDVDELNFRVQQSNQRGRRLLGK.

Disordered regions lie at residues 1 to 76 (MFGL…QSLF) and 176 to 228 (WKPK…PESA). A Phosphoserine modification is found at serine 29. The segment covering 38–49 (TLNPSKRTTSEP) has biased composition (polar residues). Residues 190–208 (TRDDSPTRRVNHLEKREKL) show a composition bias toward basic and acidic residues. In terms of domain architecture, t-SNARE coiled-coil homology spans 235 to 297 (EMEKAKQDDG…QQSNQRGRRL (63 aa)).

This sequence belongs to the SNAP-25 family. As to quaternary structure, interacts with the cytokinesis-specific syntaxin KNOLLE and with SYP121. Binds to EXO70B2. Ubiquitous, with a strong expression in root tips, ovules, very young leaves, vascular tissue, hydathodes, stipules and the abscission and dehiscence zones of the siliques.

The protein localises to the membrane. Its function is as follows. t-SNARE involved in diverse vesicle trafficking and membrane fusion processes, including cell plate formation. May function in the secretory pathway. The chain is SNAP25 homologous protein SNAP33 from Arabidopsis thaliana (Mouse-ear cress).